We begin with the raw amino-acid sequence, 173 residues long: ATP synthase subunit beta, mitochondrial (173 aa).

Belongs to the ATPase alpha/beta chains family. As to quaternary structure, F-type ATPases have 2 components, CF(1) - the catalytic core - and CF(0) - the membrane proton channel. CF(1) has five subunits: alpha(3), beta(3), gamma(1), delta(1), epsilon(1). CF(0) has three main subunits: a, b and c.

Its subcellular location is the mitochondrion. It localises to the mitochondrion inner membrane. The enzyme catalyses ATP + H2O + 4 H(+)(in) = ADP + phosphate + 5 H(+)(out). Its function is as follows. Mitochondrial membrane ATP synthase (F(1)F(0) ATP synthase or Complex V) produces ATP from ADP in the presence of a proton gradient across the membrane which is generated by electron transport complexes of the respiratory chain. F-type ATPases consist of two structural domains, F(1) - containing the extramembraneous catalytic core and F(0) - containing the membrane proton channel, linked together by a central stalk and a peripheral stalk. During catalysis, ATP synthesis in the catalytic domain of F(1) is coupled via a rotary mechanism of the central stalk subunits to proton translocation. Subunits alpha and beta form the catalytic core in F(1). Rotation of the central stalk against the surrounding alpha(3)beta(3) subunits leads to hydrolysis of ATP in three separate catalytic sites on the beta subunits. The protein is ATP synthase subunit beta, mitochondrial (ATPB) of Actinidia deliciosa (Kiwi).